A 335-amino-acid chain; its full sequence is MFVDQITLELRAGKGGNGVVAWRKEKYLPKGGPYGGNGGNGGSILIEAVTNMYSFEEYRNLSFLKADDGQAGASNNRTGRNGKDLVLKVPEGTLLRDAATGELIHDFTKDGERIVVCQGGRGGKGNVFFKTSTNRAPTKATPGKPGEIRLVELELKLIADIGLVGFPNAGKSTLFNTLARTEVKVGAYPFTTLHPSLGLVHQEGMLYQKPWIMADIPGIIEGASQNRGLGLDFLRHIERTRLLLFVIDISGIERHSPEQDLKILMGELLAYKEELKDKDMVIALNKIDQLLPDEREERVALLKQQFPDQEFILLSGLTGEGVDALYDLFKSKLSE.

In terms of domain architecture, Obg spans 1–158 (MFVDQITLEL…RLVELELKLI (158 aa)). The 176-residue stretch at 159-334 (ADIGLVGFPN…LYDLFKSKLS (176 aa)) folds into the OBG-type G domain. GTP-binding positions include 165–172 (GFPNAGKS), 190–194 (FTTLH), 215–218 (DIPG), 285–288 (NKID), and 315–317 (SGL). Positions 172 and 192 each coordinate Mg(2+).

The protein belongs to the TRAFAC class OBG-HflX-like GTPase superfamily. OBG GTPase family. In terms of assembly, monomer. Requires Mg(2+) as cofactor.

It localises to the cytoplasm. An essential GTPase which binds GTP, GDP and possibly (p)ppGpp with moderate affinity, with high nucleotide exchange rates and a fairly low GTP hydrolysis rate. Plays a role in control of the cell cycle, stress response, ribosome biogenesis and in those bacteria that undergo differentiation, in morphogenesis control. In Chlamydia trachomatis serovar A (strain ATCC VR-571B / DSM 19440 / HAR-13), this protein is GTPase Obg.